A 454-amino-acid chain; its full sequence is Ribosomal protein uS12 methylthiotransferase RimO (454 aa).

One can recognise an MTTase N-terminal domain in the interval 14-125; that stretch reads SKVAFSHVGC…IAKVLDRVEK (112 aa). Positions 23, 59, 88, 163, 167, and 170 each coordinate [4Fe-4S] cluster. The Radical SAM core domain occupies 149–378; it reads DKNKFVAYLR…ISVQQNISKD (230 aa). The TRAM domain maps to 381-452; sequence QSYVGSKMKI…EYDLYGETLK (72 aa).

The protein belongs to the methylthiotransferase family. RimO subfamily. [4Fe-4S] cluster serves as cofactor.

The protein resides in the cytoplasm. It catalyses the reaction L-aspartate(89)-[ribosomal protein uS12]-hydrogen + (sulfur carrier)-SH + AH2 + 2 S-adenosyl-L-methionine = 3-methylsulfanyl-L-aspartate(89)-[ribosomal protein uS12]-hydrogen + (sulfur carrier)-H + 5'-deoxyadenosine + L-methionine + A + S-adenosyl-L-homocysteine + 2 H(+). Catalyzes the methylthiolation of an aspartic acid residue of ribosomal protein uS12. This is Ribosomal protein uS12 methylthiotransferase RimO from Prochlorococcus marinus (strain MIT 9215).